Reading from the N-terminus, the 844-residue chain is Meiotically up-regulated gene 61 protein (844 aa).

Disordered stretches follow at residues 333 to 354 (ENNS…PQSQ) and 384 to 415 (NFGL…EISS). Polar residues predominate over residues 384 to 394 (NFGLEASNTST). Residues 395–407 (PEKKKFDSQKPDD) show a composition bias toward basic and acidic residues. Residues 459–479 (VVNSLWLVLLVVPLLGFVGFW) form a helical membrane-spanning segment. ATP is bound at residue 605 to 612 (AKNLNGKS). A helical membrane pass occupies residues 705 to 725 (VISCWRIYLLIGILAAITGTV).

In terms of assembly, interacts with sad1.

Its subcellular location is the endoplasmic reticulum membrane. It localises to the nucleus membrane. In terms of biological role, required for correct meiotic chromosome segregation. The chain is Meiotically up-regulated gene 61 protein (mug61) from Schizosaccharomyces pombe (strain 972 / ATCC 24843) (Fission yeast).